The sequence spans 96 residues: Protein C4 (96 aa).

Gly-2 carries the N-myristoyl glycine; by host lipid modification. The tract at residues 66-96 is disordered; that stretch reads STDDLQGEDSRQPMTLTPRQLTQEVSRRLLM. A compositionally biased stretch (polar residues) spans 77–89; that stretch reads QPMTLTPRQLTQE.

This sequence belongs to the geminiviridae protein AC4/C4 family.

The protein resides in the host cell membrane. Its function is as follows. Pathogenicity determinant. May act as a suppressor of RNA-mediated gene silencing, also known as post-transcriptional gene silencing (PTGS), a mechanism of plant viral defense that limits the accumulation of viral RNAs. The protein is Protein C4 of Cynanchum acutum (Tomato).